An 88-amino-acid chain; its full sequence is Small ribosomal subunit protein uS17 (88 aa).

The protein belongs to the universal ribosomal protein uS17 family. Part of the 30S ribosomal subunit.

In terms of biological role, one of the primary rRNA binding proteins, it binds specifically to the 5'-end of 16S ribosomal RNA. In Mycoplasmopsis agalactiae (strain NCTC 10123 / CIP 59.7 / PG2) (Mycoplasma agalactiae), this protein is Small ribosomal subunit protein uS17.